The following is a 338-amino-acid chain: Solute carrier family 35 member G5 (338 aa).

A disordered region spans residues 1 to 21 (MAGSHPYFNLPDSTHPSPPSA). Helical transmembrane passes span 37-57 (TNGL…VGPL), 67-87 (LPSL…ALPL), 105-125 (CFCA…VQVV), 160-180 (CGLL…LWTL), 190-210 (ALGY…LLVY), 221-241 (TVAF…LFVL), 250-270 (LLSW…FTCV), 281-301 (LVCA…YYVL), and 305-325 (VAPF…IITA). The EamA 1 domain occupies 49–174 (LPAGFVGPLS…SILGLIIIVG (126 aa)). Residues 272–325 (YAVTKAHPALVCAVLHSEVVVALILQYYVLHETVAPFDITGAGIVLGSIAIITA) form the EamA 2 domain.

It belongs to the SLC35G solute transporter family.

The protein resides in the membrane. The sequence is that of Solute carrier family 35 member G5 (SLC35G5) from Pan paniscus (Pygmy chimpanzee).